Consider the following 279-residue polypeptide: MAGRVEGKVAFITGAARGQGRSHAVRLAEEGADIIAVDVCRRISSNEDIPASTPEDLAETVELVKGLNRRIVAEEVDVRDYDALKAVVDSGVEQLGGLDIVVANAGIGNGGATLDKTSEADWDDMIGVNLSGVWKTVKAAVPHLISGGNGGSIILTSSVGGLKAYPHTGHYIAAKHGVVGLMRTFAVELGQHSIRVNSVHPTNVNTPLFMNEGTMKLFRPDLENPGPDDMAVVAQMMHVLPVGWVEPRDISNAVLFLASDEARYVTGLPMTVDAGSMLK.

Position 11 to 33 (Phe11 to Asp33) interacts with NAD(+). An Isoglutamyl lysine isopeptide (Lys-Gln) (interchain with Q-Cter in protein Pup) cross-link involves residue Lys65. Substrate is bound at residue Ser158. Tyr171 functions as the Proton acceptor in the catalytic mechanism.

Belongs to the short-chain dehydrogenases/reductases (SDR) family.

The protein is Putative short-chain type dehydrogenase/reductase MSMEG_6031/MSMEI_5872 of Mycolicibacterium smegmatis (strain ATCC 700084 / mc(2)155) (Mycobacterium smegmatis).